The sequence spans 213 residues: Nicotinate-nucleotide adenylyltransferase (213 aa).

It belongs to the NadD family.

It catalyses the reaction nicotinate beta-D-ribonucleotide + ATP + H(+) = deamido-NAD(+) + diphosphate. It participates in cofactor biosynthesis; NAD(+) biosynthesis; deamido-NAD(+) from nicotinate D-ribonucleotide: step 1/1. Catalyzes the reversible adenylation of nicotinate mononucleotide (NaMN) to nicotinic acid adenine dinucleotide (NaAD). The sequence is that of Nicotinate-nucleotide adenylyltransferase from Salmonella typhi.